Here is a 520-residue protein sequence, read N- to C-terminus: Cytochrome P450 4F8 (520 aa).

Residues 15-37 (AASPWLLLLVVGASWLLARILAW) form a helical membrane-spanning segment. Cys468 lines the heme pocket.

This sequence belongs to the cytochrome P450 family. The cofactor is heme. Expressed in the epithelium of seminal vesicles, in renal cortex, in adult and fetal liver, in epidermis, in corneal epithelium, in sweat glands, hair follicles, epithelial linings of the ampulla of vas deferens and of the stomach and small intestine, as well as in the transitional epithelium of the bladder and ureter (at protein level). In the epidermis, expressed from the basal cell to the granular cell layers. In the corneal epithelium, expressed in all cell layers. Also detected in prostate. Up-regulated in the epidermis of psoriatic lesions.

It localises to the endoplasmic reticulum membrane. The protein resides in the microsome membrane. The catalysed reaction is an organic molecule + reduced [NADPH--hemoprotein reductase] + O2 = an alcohol + oxidized [NADPH--hemoprotein reductase] + H2O + H(+). It carries out the reaction (5Z,8Z,11Z,14Z)-eicosatetraenoate + reduced [NADPH--hemoprotein reductase] + O2 = (18R)-hydroxy-(5Z,8Z,11Z,14Z)-eicosatetraenoate + oxidized [NADPH--hemoprotein reductase] + H2O + H(+). The enzyme catalyses (4Z,7Z,10Z,13Z,16Z)-docosapentaenoate + reduced [NADPH--hemoprotein reductase] + O2 = 20-hydroxy-(4Z,7Z,10Z,13Z,16Z)-docosapentaenoate + oxidized [NADPH--hemoprotein reductase] + H2O + H(+). It catalyses the reaction prostaglandin H1 + reduced [NADPH--hemoprotein reductase] + O2 = 19-hydroxyprostaglandin H1 + oxidized [NADPH--hemoprotein reductase] + H2O + H(+). The catalysed reaction is prostaglandin H2 + reduced [NADPH--hemoprotein reductase] + O2 = 19-hydroxyprostaglandin H2 + oxidized [NADPH--hemoprotein reductase] + H2O + H(+). It carries out the reaction prostaglandin I2 + reduced [NADPH--hemoprotein reductase] + O2 = 19-hydroxy-prostaglandin I2 + oxidized [NADPH--hemoprotein reductase] + H2O + H(+). The enzyme catalyses (4Z,7Z,10Z,13Z,16Z,19Z)-docosahexaenoate + reduced [NADPH--hemoprotein reductase] + O2 = 10,11-epoxy-(4Z,7Z,13Z,16Z,19Z)-docosapentaenoate + oxidized [NADPH--hemoprotein reductase] + H2O + H(+). It catalyses the reaction (4Z,7Z,10Z,13Z,16Z,19Z)-docosahexaenoate + reduced [NADPH--hemoprotein reductase] + O2 = 13,14-epoxy-(4Z,7Z,10Z,16Z,19Z)-docosapentaenoate + oxidized [NADPH--hemoprotein reductase] + H2O + H(+). The catalysed reaction is (4Z,7Z,10Z,13Z,16Z,19Z)-docosahexaenoate + reduced [NADPH--hemoprotein reductase] + O2 = 16,17-epoxy-(4Z,7Z,10Z,13Z,19Z)-docosapentaenoate + oxidized [NADPH--hemoprotein reductase] + H2O + H(+). It carries out the reaction (4Z,7Z,10Z,13Z,16Z,19Z)-docosahexaenoate + reduced [NADPH--hemoprotein reductase] + O2 = 19,20-epoxy-(4Z,7Z,10Z,13Z,16Z)-docosapentaenoate + oxidized [NADPH--hemoprotein reductase] + H2O + H(+). The enzyme catalyses (7Z,10Z,13Z,16Z,19Z)-docosapentaenoate + reduced [NADPH--hemoprotein reductase] + O2 = 10,11-epoxy-(7Z,13Z,16Z,19Z)-docosatetraenoate + oxidized [NADPH--hemoprotein reductase] + H2O + H(+). It catalyses the reaction (7Z,10Z,13Z,16Z,19Z)-docosapentaenoate + reduced [NADPH--hemoprotein reductase] + O2 = 13,14-epoxy-(7Z,10Z,16Z,19Z)-docosatetraenoate + oxidized [NADPH--hemoprotein reductase] + H2O + H(+). The catalysed reaction is (7Z,10Z,13Z,16Z,19Z)-docosapentaenoate + reduced [NADPH--hemoprotein reductase] + O2 = 16,17-epoxy-(7Z,10Z,13Z,19Z)-docosatetraenoate + oxidized [NADPH--hemoprotein reductase] + H2O + H(+). It carries out the reaction (7Z,10Z,13Z,16Z,19Z)-docosapentaenoate + reduced [NADPH--hemoprotein reductase] + O2 = 19,20-epoxy-(7Z,10Z,13Z,16Z)-docosatetraenoate + oxidized [NADPH--hemoprotein reductase] + H2O + H(+). It functions in the pathway lipid metabolism; fatty acid metabolism. Functionally, a cytochrome P450 monooxygenase involved in the metabolism of endogenous polyunsaturated fatty acids (PUFAs) and their oxygenated derivatives (oxylipins). Mechanistically, uses molecular oxygen inserting one oxygen atom into a substrate, and reducing the second into a water molecule, with two electrons provided by NADPH via cytochrome P450 reductase (CPR; NADPH-ferrihemoprotein reductase). Catalyzes the hydroxylation of carbon hydrogen bonds, with preference for omega-1 and omega-2 positions. Hydroxylates (5Z,8Z,11Z,14Z)-eicosatetraenoic acid (arachidonate) predominantly at omega-2 position to form (18R)-hydroxyeicosatetraenoic acid (18R-HETE). Exhibits omega-1 hydroxylase activity toward prostaglandin (PG) H1, PGH2 and PGI2. Catalyzes the epoxidation of double bonds of PUFAs, including docosahexaenoic and docosapentaenoic acids. Shows little activity against PGD2, PGE1, PGE2, PGF2alpha, and leukotriene B4. This is Cytochrome P450 4F8 from Homo sapiens (Human).